Consider the following 465-residue polypeptide: Interferon-inducible GTPase 5 (465 aa).

One can recognise an IRG-type G domain in the interval 53–235 (TRLEVGVTGE…PLLMSTWERD (183 aa)). Residues 62-69 (ESGAGKSS), 87-91 (TGVVE), 169-171 (KVD), and 216-218 (SNL) contribute to the GTP site. A phosphoserine mark is found at Ser247 and Ser304. A disordered region spans residues 405-438 (EEEEDTQPDVSLEAAGDNGVEKRGSGEGSMEEAP).

The protein belongs to the TRAFAC class dynamin-like GTPase superfamily. IRG family.

It is found in the cell projection. It localises to the cilium. The protein localises to the flagellum. The protein resides in the lipid droplet. It carries out the reaction GTP + H2O = GDP + phosphate + H(+). Functionally, required for sperm motility and therefore male fertility, via positive regulation of spermatozoa fibrous sheath formation. The sequence is that of Interferon-inducible GTPase 5 (IRGC) from Bos taurus (Bovine).